The following is a 230-amino-acid chain: MTQDELKRLVGQAAADYVIQNVPEGAVIGVGTGSTANCFIDALAAVKARYRGAVSSSLATTERLKSHGIKVFDLNEIESLQVYVDGADEIDASGAMIKGGGGALTREKIVASVADTFVCIADASKRVPVLGAFPLPIEVVPMARTAIGRRVTALGGVPVLRVTKDGAPYITDNGNEIIDVKGLQIADPRGFEAQVNAWPGVVTVGLFAERGANLCLLGTPNGVETIVYPA.

Substrate contacts are provided by residues 32-35, 85-88, and 98-101; these read TGST, DGAD, and KGGG. Glu107 serves as the catalytic Proton acceptor. Lys125 is a substrate binding site.

It belongs to the ribose 5-phosphate isomerase family. As to quaternary structure, homodimer.

The catalysed reaction is aldehydo-D-ribose 5-phosphate = D-ribulose 5-phosphate. It participates in carbohydrate degradation; pentose phosphate pathway; D-ribose 5-phosphate from D-ribulose 5-phosphate (non-oxidative stage): step 1/1. Functionally, catalyzes the reversible conversion of ribose-5-phosphate to ribulose 5-phosphate. The protein is Ribose-5-phosphate isomerase A of Burkholderia ambifaria (strain ATCC BAA-244 / DSM 16087 / CCUG 44356 / LMG 19182 / AMMD) (Burkholderia cepacia (strain AMMD)).